A 198-amino-acid polypeptide reads, in one-letter code: Glycerol-3-phosphate acyltransferase (198 aa).

5 helical membrane-spanning segments follow: residues 10-30, 57-77, 86-106, 118-138, and 160-180; these read LIPI…WILV, GISF…ILIL, IMYL…WFLF, VVLS…AVVF, and AVTE…IVLI.

The protein belongs to the PlsY family. In terms of assembly, probably interacts with PlsX.

The protein localises to the cell inner membrane. It catalyses the reaction an acyl phosphate + sn-glycerol 3-phosphate = a 1-acyl-sn-glycero-3-phosphate + phosphate. Its pathway is lipid metabolism; phospholipid metabolism. In terms of biological role, catalyzes the transfer of an acyl group from acyl-phosphate (acyl-PO(4)) to glycerol-3-phosphate (G3P) to form lysophosphatidic acid (LPA). This enzyme utilizes acyl-phosphate as fatty acyl donor, but not acyl-CoA or acyl-ACP. This Anaplasma marginale (strain Florida) protein is Glycerol-3-phosphate acyltransferase.